A 76-amino-acid polypeptide reads, in one-letter code: Sec-independent protein translocase protein TatA (76 aa).

Residues 1–21 (MGGISIWQLLIIVAIIVLLFG) form a helical membrane-spanning segment. A disordered region spans residues 43 to 76 (MADDKSQPQDASFEKVEAKEAASTEQKAKEKEQA).

Belongs to the TatA/E family. As to quaternary structure, the Tat system comprises two distinct complexes: a TatABC complex, containing multiple copies of TatA, TatB and TatC subunits, and a separate TatA complex, containing only TatA subunits. Substrates initially bind to the TatABC complex, which probably triggers association of the separate TatA complex to form the active translocon.

Its subcellular location is the cell inner membrane. Part of the twin-arginine translocation (Tat) system that transports large folded proteins containing a characteristic twin-arginine motif in their signal peptide across membranes. TatA could form the protein-conducting channel of the Tat system. The chain is Sec-independent protein translocase protein TatA from Actinobacillus pleuropneumoniae serotype 5b (strain L20).